The chain runs to 184 residues: Mitochondrial translation release factor in rescue (184 aa).

The N-terminal 98 residues, 1–98, are a transit peptide targeting the mitochondrion; that stretch reads MSSRSTWALL…HVPSGIVVKC (98 aa). The tract at residues 60-124 is GGQ domain; sequence ESELEEQFVK…LQEKVDVFYN (65 aa). Positions 74-76 match the GGQ motif; the sequence is GGQ. Q76 carries the N5-methylglutamine modification. Residues 130–178 are a coiled coil; sequence VHKEKLEAERRKRERKKRAKETLEKKKLLKELREASQNITEKKADADGI. Residues 132 to 184 form a disordered region; it reads KEKLEAERRKRERKKRAKETLEKKKLLKELREASQNITEKKADADGIPRGFQE. The segment covering 149–184 has biased composition (basic and acidic residues); sequence KETLEKKKLLKELREASQNITEKKADADGIPRGFQE.

This sequence belongs to the prokaryotic/mitochondrial release factor family. In terms of assembly, interacts (via C-terminus) with MTRES1 (via S4 domain). Associates with mitoribosomal S39 large subunit, peptidyl tRNA and nascent chain. In terms of processing, methylation of glutamine in the GGQ triplet by HEMK1.

It localises to the mitochondrion. Part of a mitoribosome-associated quality control pathway that prevents aberrant translation by responding to interruptions during elongation. As heterodimer with MTRES1, ejects the unfinished nascent chain and peptidyl transfer RNA (tRNA), respectively, from stalled ribosomes. Recruitment of mitoribosome biogenesis factors to these quality control intermediates suggests additional roles for MTRES1 and MTRF during mitoribosome rescue. The protein is Mitochondrial translation release factor in rescue of Mus musculus (Mouse).